The following is a 472-amino-acid chain: E3 ubiquitin-protein ligase MYLIP-A (472 aa).

One can recognise an FERM domain in the interval 1-279 (MLCHVTRPDA…ETHAFYRCDT (279 aa)). An RING-type zinc finger spans residues 384–419 (CMLCCEEEIDAAFCPCGHMVCCQNCAAQLQSCPVCR).

In terms of assembly, interacts with anxa5. Ubiquitous.

Its subcellular location is the cytoplasm. The protein resides in the cytosol. The enzyme catalyses S-ubiquitinyl-[E2 ubiquitin-conjugating enzyme]-L-cysteine + [acceptor protein]-L-lysine = [E2 ubiquitin-conjugating enzyme]-L-cysteine + N(6)-ubiquitinyl-[acceptor protein]-L-lysine.. Its pathway is protein modification; protein ubiquitination. E3 ubiquitin-protein ligase that mediates ubiquitination and subsequent proteasomal degradation of myosin regulatory light chain (MRLC). Regulates cell movements during gastrulation by acting downstream of fz7 to antagonize the frizzled-signaling pathway. The sequence is that of E3 ubiquitin-protein ligase MYLIP-A (mylipa) from Danio rerio (Zebrafish).